A 198-amino-acid chain; its full sequence is Translation initiation factor IF-3 (198 aa).

Positions 168-198 are disordered; sequence SLAPKKAGSPKKAETDTAKKENPKKAVETKE. Positions 178–198 are enriched in basic and acidic residues; that stretch reads KKAETDTAKKENPKKAVETKE.

It belongs to the IF-3 family. Monomer.

It is found in the cytoplasm. In terms of biological role, IF-3 binds to the 30S ribosomal subunit and shifts the equilibrium between 70S ribosomes and their 50S and 30S subunits in favor of the free subunits, thus enhancing the availability of 30S subunits on which protein synthesis initiation begins. In Phocaeicola vulgatus (strain ATCC 8482 / DSM 1447 / JCM 5826 / CCUG 4940 / NBRC 14291 / NCTC 11154) (Bacteroides vulgatus), this protein is Translation initiation factor IF-3.